The primary structure comprises 141 residues: Oleosin L (141 aa).

Helical transmembrane passes span 23–43 (VLFF…LALA), 46–66 (VVLM…ILPV), and 74–94 (AAAF…LIWV). Residues 54–65 (PVFLLLSPVILP) carry the Proline-knot motif.

The protein belongs to the oleosin family. In terms of tissue distribution, expressed in megagametophytes (at protein level).

It is found in the lipid droplet. The protein resides in the membrane. In Pinus massoniana (Chinese red pine), this protein is Oleosin L.